The sequence spans 127 residues: MATKLSQEELLEQFESLTLIELAEFVKAFEEKFDVTAAAAVAAAPAGPVAAAEAAEEQDEFDVILTGAGDKKIQVIKVVRELTSLGLKEAKDLVDGAPKPVLEKVAKEAAEKAAESLKGAGASVEVK.

The protein belongs to the bacterial ribosomal protein bL12 family. In terms of assembly, homodimer. Part of the ribosomal stalk of the 50S ribosomal subunit. Forms a multimeric L10(L12)X complex, where L10 forms an elongated spine to which 2 to 4 L12 dimers bind in a sequential fashion. Binds GTP-bound translation factors.

Functionally, forms part of the ribosomal stalk which helps the ribosome interact with GTP-bound translation factors. Is thus essential for accurate translation. The chain is Large ribosomal subunit protein bL12 from Streptomyces avermitilis (strain ATCC 31267 / DSM 46492 / JCM 5070 / NBRC 14893 / NCIMB 12804 / NRRL 8165 / MA-4680).